Consider the following 317-residue polypeptide: Insulin-like growth factor-binding protein 2 (317 aa).

A signal peptide spans 1 to 33 (MQPRLGGPALLLLPPLLLLLLLGAGGGDCGARA). The IGFBP N-terminal domain occupies 35–126 (VLFRCPPCTP…VHGEGTCEKH (92 aa)). Disulfide bonds link C39–C76, C42–C78, C50–C79, C68–C82, C90–C103, and C97–C123. Disordered stretches follow at residues 126-146 (HGDA…EEHS) and 190-218 (QHRQ…ARTP). Positions 216–298 (RTPCQQELDQ…APTIRGDPEC (83 aa)) constitute a Thyroglobulin type-1 domain. 3 cysteine pairs are disulfide-bonded: C219–C253, C264–C275, and C277–C298. The short motif at 293–295 (RGD) is the Cell attachment site element.

As to quaternary structure, interacts with IGF1. Interacts with IGF2. Interacts (via RGD motif) with integrin alpha5/ITGA5; this interaction induces cell migration, adhesion or apoptosis according to the context. Interacts with PTPRB; this interaction leads to PTPRB dimerization and inactivation. Post-translationally, cleaved by MMP9 leading to release of free IGF2 from IGFBP2-IGF2 complex, which contributes to enhance the motility and the growth of astrocytes. O-glycosylated.

It is found in the secreted. Functionally, multifunctional protein that plays a critical role in regulating the availability of IGFs such as IGF1 and IGF2 to their receptors and thereby regulates IGF-mediated cellular processes including proliferation, differentiation, and apoptosis in a cell-type specific manner. Functions coordinately with receptor protein tyrosine phosphatase beta/PTPRB and the IGF1 receptor to regulate IGF1-mediated signaling by stimulating the phosphorylation of PTEN leading to its inactivation and AKT1 activation. Plays a positive role in cell migration via interaction with integrin alpha5/ITGA5 through an RGD motif. Additionally, interaction with ITGA5/ITGB1 enhances the adhesion of endothelial progenitor cells to endothelial cells. Upon mitochondrial damage, facilitates apoptosis with ITGA5 of podocytes, and then activates the phosphorylation of focal adhesion kinase (FAK)-mediated mitochondrial injury. This chain is Insulin-like growth factor-binding protein 2 (IGFBP2), found in Bos taurus (Bovine).